The chain runs to 107 residues: Nucleoid-associated protein RP866 (107 aa).

This sequence belongs to the YbaB/EbfC family. Homodimer.

It localises to the cytoplasm. It is found in the nucleoid. Functionally, binds to DNA and alters its conformation. May be involved in regulation of gene expression, nucleoid organization and DNA protection. In Rickettsia prowazekii (strain Madrid E), this protein is Nucleoid-associated protein RP866.